We begin with the raw amino-acid sequence, 211 residues long: SAGA-associated factor 11 homolog (211 aa).

Residues 115–136 (CTCPHCDRLVAAARFAPHLEKC) form an SGF11-type zinc finger. The disordered stretch occupies residues 153 to 211 (TKEGASASSSSTSTYIQSGGNTGGTDDEDDVDWSSDKRKKKSTQNSRNNGSKKNNGKIF). A compositionally biased stretch (low complexity) spans 157–166 (ASASSSSTST). Residue serine 187 is modified to Phosphoserine. The segment covering 197 to 211 (NSRNNGSKKNNGKIF) has biased composition (low complexity).

Belongs to the SGF11 family. In terms of assembly, component of some SAGA transcription coactivator-HAT complexes, at least composed of Ada2b, not/nonstop, Pcaf/Gcn5, Sgf11 and Spt3. Within the SAGA complex, Sgf11, e(y)2, and not/nonstop form an additional subcomplex of SAGA called the DUB module (deubiquitination module). Interacts directly with not/nonstop. Interacts with the AMEX complex component xmas-2. Interacts with Cbp80; important for promoter recruitment of Sgf11 that is not associated with the DUB module.

It localises to the nucleus. The protein resides in the nucleoplasm. It is found in the cytoplasm. Functionally, component of the transcription regulatory histone acetylation (HAT) complex SAGA, a multiprotein complex that activates transcription by remodeling chromatin and mediating histone acetylation and deubiquitination. Within the SAGA complex, participates in a subcomplex that specifically deubiquitinates histone H2B. The SAGA complex is recruited to specific gene promoters by activators, where it is required for transcription. Required for nuclear receptor-mediated transactivation. Binds independently on SAGA to promoters in an RNA-dependent manner. Binds to mRNA and is essential for total mRNA export from the nucleus. Required to counteract heterochromatin silencing. Controls the development of neuronal connectivity in visual system by being required for accurate axon targeting in the optic lobe. Required for expression of ecdysone-induced genes such as br/broad. This is SAGA-associated factor 11 homolog from Drosophila mojavensis (Fruit fly).